A 1408-amino-acid polypeptide reads, in one-letter code: ABC multidrug transporter MDR1 (1408 aa).

A compositionally biased stretch (low complexity) spans 1-13 (MSASPSPIGAAAG). A disordered region spans residues 1–103 (MSASPSPIGA…SISSAVPKSH (103 aa)). Positions 17–38 (LQARRDEEVVDSEKDALAHDSH) are enriched in basic and acidic residues. Transmembrane regions (helical) follow at residues 147–167 (FAAP…IAAG) and 223–243 (LYLM…MFIW). The 308-residue stretch at 157–464 (VFGLLLAIAA…LAPELAAVTK (308 aa)) folds into the ABC transmembrane type-1 1 domain. N-linked (GlcNAc...) asparagine glycosylation is present at asparagine 244. Helical transmembrane passes span 296-316 (KVAL…LAFV), 321-341 (LAGA…IMMT), 408-428 (IMFF…GILV), and 436-456 (GIVI…AMLA). The region spanning 499–744 (ISFENVRFHY…ENGPYAQLVN (246 aa)) is the ABC transporter 1 domain. Residue 534 to 541 (GASGSGKS) participates in ATP binding. 2 helical membrane passes run 838 to 858 (IFAF…AILF) and 882 to 902 (LWYF…SAGF). Residues 838–1125 (IFAFIAAICA…VFTFVPDASK (288 aa)) enclose the ABC transmembrane type-1 2 domain. Asparagine 934 carries N-linked (GlcNAc...) asparagine glycosylation. Helical transmembrane passes span 952–972 (GLFG…IGGC), 973–993 (IIGL…IPIL), 1072–1092 (GLTF…IIDG), and 1099–1119 (FYTV…VFTF). N-linked (GlcNAc...) asparagine glycans are attached at residues asparagine 1127 and asparagine 1182. An ABC transporter 2 domain is found at 1162–1402 (VRIEGVHFRY…KGGYYDLVQM (241 aa)). 1197-1204 (GPSGCGKS) contributes to the ATP binding site. A glycan (N-linked (GlcNAc...) asparagine) is linked at asparagine 1404.

Belongs to the ABC transporter superfamily. ABCB family. Multidrug resistance exporter (TC 3.A.1.201) subfamily.

The protein localises to the cell membrane. The enzyme catalyses itraconazole(in) + ATP + H2O = itraconazole(out) + ADP + phosphate + H(+). It carries out the reaction voriconazole(in) + ATP + H2O = voriconazole(out) + ADP + phosphate + H(+). It catalyses the reaction fluconazole(in) + ATP + H2O = fluconazole(out) + ADP + phosphate + H(+). Pleiotropic ABC efflux transporter that confers resistance to structurally and functionally unrelated compounds including azoles such as fluconazole (FLC), itraconazole (ITC), posaconazole (POS), nocodazole and voriconazole (VRC). This is ABC multidrug transporter MDR1 from Cryptococcus deuterogattii (strain R265) (Cryptococcus gattii VGII (strain R265)).